The chain runs to 70 residues: MTTILLKENEPFEVAIRRFRRAIEKNGLIAELRERQAYEKPTAVRKRKKAAAVKRLHKRLRSQMLPKKLH.

Belongs to the bacterial ribosomal protein bS21 family.

The chain is Small ribosomal subunit protein bS21A (rpsU1) from Burkholderia mallei (strain ATCC 23344).